A 1341-amino-acid chain; its full sequence is DNA-directed RNA polymerase subunit beta (1341 aa).

This sequence belongs to the RNA polymerase beta chain family. The RNAP catalytic core consists of 2 alpha, 1 beta, 1 beta' and 1 omega subunit. When a sigma factor is associated with the core the holoenzyme is formed, which can initiate transcription.

It catalyses the reaction RNA(n) + a ribonucleoside 5'-triphosphate = RNA(n+1) + diphosphate. DNA-dependent RNA polymerase catalyzes the transcription of DNA into RNA using the four ribonucleoside triphosphates as substrates. The protein is DNA-directed RNA polymerase subunit beta of Blochmanniella pennsylvanica (strain BPEN).